A 56-amino-acid polypeptide reads, in one-letter code: Large ribosomal subunit protein eL40 (56 aa).

It belongs to the eukaryotic ribosomal protein eL40 family.

The sequence is that of Large ribosomal subunit protein eL40 from Metallosphaera sedula (strain ATCC 51363 / DSM 5348 / JCM 9185 / NBRC 15509 / TH2).